The primary structure comprises 66 residues: ATP synthase protein 8 (66 aa).

Residues 8–24 (PWPMVIMSMILTLFYIT) form a helical membrane-spanning segment. Lysine 54 bears the N6-acetyllysine; alternate mark. At lysine 54 the chain carries N6-succinyllysine; alternate. Lysine 57 is modified (N6-acetyllysine).

It belongs to the ATPase protein 8 family. In terms of assembly, F-type ATPases have 2 components, CF(1) - the catalytic core - and CF(0) - the membrane proton channel. Component of an ATP synthase complex composed of ATP5PB, ATP5MC1, ATP5F1E, ATP5PD, ATP5ME, ATP5PF, ATP5MF, MT-ATP6, MT-ATP8, ATP5F1A, ATP5F1B, ATP5F1D, ATP5F1C, ATP5PO, ATP5MG, ATP5MK and ATP5MJ. Interacts with PRICKLE3.

The protein localises to the mitochondrion membrane. Mitochondrial membrane ATP synthase (F(1)F(0) ATP synthase or Complex V) produces ATP from ADP in the presence of a proton gradient across the membrane which is generated by electron transport complexes of the respiratory chain. F-type ATPases consist of two structural domains, F(1) - containing the extramembraneous catalytic core and F(0) - containing the membrane proton channel, linked together by a central stalk and a peripheral stalk. During catalysis, ATP synthesis in the catalytic domain of F(1) is coupled via a rotary mechanism of the central stalk subunits to proton translocation. Part of the complex F(0) domain. Minor subunit located with subunit a in the membrane. In Alouatta guariba (Brown howler monkey), this protein is ATP synthase protein 8 (MT-ATP8).